Reading from the N-terminus, the 38-residue chain is Large ribosomal subunit protein bL36 (38 aa).

The protein belongs to the bacterial ribosomal protein bL36 family.

The protein is Large ribosomal subunit protein bL36 of Chlorobium limicola (strain DSM 245 / NBRC 103803 / 6330).